The primary structure comprises 743 residues: Iron-sulfur clusters transporter ABCB7, mitochondrial (743 aa).

The N-terminal 19 residues, 1–19 (MAPLLVPLKCGFHMQRRKL), are a transit peptide targeting the mitochondrion. At 20–131 (SLLLQRSSAV…KDRPDLRARV (112 aa)) the chain is on the mitochondrial matrix side. Residues 45 to 64 (ERNTYLLSDPSRESSTWANN) are disordered. Residues 131–427 (VVISLSLLAG…LGTVYRETRQ (297 aa)) enclose the ABC transmembrane type-1 domain. A helical membrane pass occupies residues 132-152 (VISLSLLAGAKITNVMVPFMF). At 153–168 (KYAVDSLNQMSGHMLN) the chain is on the mitochondrial intermembrane side. A helical membrane pass occupies residues 169–189 (LSDAPNTVVTMATAVLIGYGV). At 190–250 (SRTGSALFNE…SKAIDRGTRG (61 aa)) the chain is on the mitochondrial matrix side. Residues 251 to 271 (ISFVLSALVFNLGPTLFEMML) traverse the membrane as a helical segment. The Mitochondrial intermembrane portion of the chain corresponds to 272 to 281 (VSGILYYKCG). The chain crosses the membrane as a helical span at residues 282–302 (GHFALVTLGTLSAYTAFTVAV). The Mitochondrial matrix segment spans residues 303-364 (TQWRTQFRIE…ESSSLKTTST (62 aa)). Glutathione contacts are provided by residues 306 to 310 (RTQFR) and 369 to 372 (NFGQ). Residues 365–385 (LAMLNFGQSAIFSVGLTAIMV) form a helical membrane-spanning segment. Residues 386–400 (LASKGIMSGTMTVGD) are Mitochondrial intermembrane-facing. The chain crosses the membrane as a helical span at residues 401–421 (LVMVNGLLFQLSLPLNFLGTV). Glycine 419 is a glutathione binding site. The Mitochondrial matrix segment spans residues 422-743 (YRETRQALID…SVKGCGNCSC (322 aa)). Residues 463–697 (IRFEDVYFEY…PGSLYANLWN (235 aa)) form the ABC transporter domain. ATP is bound by residues tyrosine 472 and 496–503 (GGSGSGKS). Residues 703 to 724 (ILSNGSKPEPVPERVSQKEEER) are disordered. The span at 712–724 (PVPERVSQKEEER) shows a compositional bias: basic and acidic residues.

The protein belongs to the ABC transporter superfamily. ABCB family. Heavy Metal importer (TC 3.A.1.210) subfamily. As to quaternary structure, homodimer.

It is found in the mitochondrion inner membrane. It carries out the reaction (glutathione)4[2Fe(III)-2S] cluster(in) + ATP + H2O = (glutathione)4[2Fe(III)-2S] cluster(out) + ADP + phosphate + H(+). In terms of biological role, exports glutathione-coordinated iron-sulfur clusters such as [2Fe-2S]-(GS)4 cluster from the mitochondria to the cytosol in an ATP-dependent manner allowing the assembly of the cytosolic iron-sulfur (Fe/S) cluster-containing proteins and participates in iron homeostasis. May play a role in cadmium, zinc and mercury detoxification. This chain is Iron-sulfur clusters transporter ABCB7, mitochondrial (abcb7), found in Danio rerio (Zebrafish).